The following is a 230-amino-acid chain: Mitochondrial fission factor homolog B (230 aa).

The Cytoplasmic portion of the chain corresponds to 1 to 210 (MSGAAFPSPT…ENKERAKREM (210 aa)). The tract at residues 117–153 (EQTSSVSHPSEEVRTQTKTRRERSVSENAGVHHNGPL) is disordered. Serine 142 carries the post-translational modification Phosphoserine. Positions 179-210 (VDATSLRRQIVKLNRRLQLLEEENKERAKREM) form a coiled coil. Residues 211–228 (VMYSITVAFWLVNSWVWF) traverse the membrane as a helical; Anchor for type IV membrane protein segment. At 229–230 (RR) the chain is on the extracellular side.

This sequence belongs to the Tango11 family.

The protein localises to the mitochondrion outer membrane. Its subcellular location is the peroxisome. Its function is as follows. Plays a role in mitochondrial and peroxisomal fission. Promotes the recruitment and association of the fission mediator dynamin-related protein 1 (DNM1L) to the mitochondrial surface. This chain is Mitochondrial fission factor homolog B, found in Danio rerio (Zebrafish).